A 507-amino-acid chain; its full sequence is Glycerol kinase 1 (507 aa).

Threonine 12 contacts ADP. Threonine 12, threonine 13, and serine 14 together coordinate ATP. Sn-glycerol 3-phosphate is bound at residue threonine 12. Arginine 16 contributes to the ADP binding site. Sn-glycerol 3-phosphate-binding residues include arginine 82, glutamate 83, tyrosine 134, and aspartate 249. Residues arginine 82, glutamate 83, tyrosine 134, aspartate 249, and glutamine 250 each contribute to the glycerol site. The ADP site is built by threonine 271 and glycine 315. Positions 271, 315, 319, and 416 each coordinate ATP. 2 residues coordinate ADP: glycine 416 and asparagine 420.

This sequence belongs to the FGGY kinase family.

The catalysed reaction is glycerol + ATP = sn-glycerol 3-phosphate + ADP + H(+). Its pathway is polyol metabolism; glycerol degradation via glycerol kinase pathway; sn-glycerol 3-phosphate from glycerol: step 1/1. Inhibited by fructose 1,6-bisphosphate (FBP). Key enzyme in the regulation of glycerol uptake and metabolism. Catalyzes the phosphorylation of glycerol to yield sn-glycerol 3-phosphate. This chain is Glycerol kinase 1, found in Streptomyces coelicolor (strain ATCC BAA-471 / A3(2) / M145).